Here is a 395-residue protein sequence, read N- to C-terminus: Acid ceramidase (395 aa).

An N-terminal signal peptide occupies residues 1 to 21; sequence MPGRSCVALVLLAAAVSCAVA. A disulfide bridge links Cys-31 with Cys-340. Catalysis depends on Cys-143, which acts as the Nucleophile. Residues Asn-173, Asn-195, Asn-259, Asn-286, Asn-342, and Asn-348 are each glycosylated (N-linked (GlcNAc...) asparagine). Cys-388 and Cys-392 are joined by a disulfide.

It belongs to the acid ceramidase family. In terms of assembly, heterodimer; disulfide-linked. The heterodimer is composed of the disulfide-linked alpha and beta chains produced by autocatalytic cleavage of the precursor. Isoform 2: May interact with NR5A1 in the nucleus; the direct interaction would negatively regulate NR5A1 transcriptional activity. N-glycosylated. Post-translationally, proteolytically cleaved into two chains alpha and beta that remain associated via a disulfide bond. Cleavage gives rise to a conformation change that activates the enzyme. The same catalytic Cys residue mediates the autoproteolytic cleavage and subsequent hydrolysis of lipid substrates. The beta chain may undergo an additional C-terminal processing. Broadly expressed with higher expression in heart.

The protein localises to the lysosome. Its subcellular location is the secreted. It is found in the nucleus. The protein resides in the cytoplasm. It catalyses the reaction an N-acylsphing-4-enine + H2O = sphing-4-enine + a fatty acid. It carries out the reaction a beta-D-glucosyl-(1&lt;-&gt;1')-N-acylsphing-4-enine + H2O = beta-D-glucosyl-(1&lt;-&gt;1)-sphing-4-enine + a fatty acid. The catalysed reaction is a globoside Gb3Cer + H2O = a lysoGb3 + a fatty acid. The enzyme catalyses a globoside Gb3Cer (d18:1(4E)) + H2O = a lysoGb3(d18:1(4E)) + a fatty acid. It catalyses the reaction N-dodecanoylsphing-4-enine + H2O = dodecanoate + sphing-4-enine. It carries out the reaction N-tetradecanoylsphing-4-enine + H2O = tetradecanoate + sphing-4-enine. The catalysed reaction is N-hexadecanoylsphing-4-enine + H2O = sphing-4-enine + hexadecanoate. The enzyme catalyses N-octadecanoylsphing-4-enine + H2O = sphing-4-enine + octadecanoate. It catalyses the reaction N-dodecanoyl-(4R)-hydroxysphinganine + H2O = (4R)-hydroxysphinganine + dodecanoate. It carries out the reaction N-(dodecanoyl)-sphinganine + H2O = dodecanoate + sphinganine. The catalysed reaction is N-(acetyl)-sphing-4-enine + H2O = sphing-4-enine + acetate. The enzyme catalyses N-(hexanoyl)sphing-4-enine + H2O = hexanoate + sphing-4-enine. It catalyses the reaction N-octanoylsphing-4-enine + H2O = octanoate + sphing-4-enine. It carries out the reaction N-(9Z-octadecenoyl)-sphing-4-enine + H2O = sphing-4-enine + (9Z)-octadecenoate. The catalysed reaction is N-dodecanoylethanolamine + H2O = dodecanoate + ethanolamine. Its pathway is lipid metabolism; sphingolipid metabolism. Its activity is regulated as follows. Activated by Ca(2+), Mg(2+) and Na(+) cations. Inhibited by Zn(2+). Phosphatidylserine and phosphatidic acid stimulate while cardiolipin, phosphatidylcholine, lysophosphatidylcholine, phosphatidylethanolamine, phosphatidylinositol and sphingomyelin inhibit the reverse ceramide synthase activity. Phosphatidic acid, phosphatidylinositol and C16-ceramide inhibit the ceramidase/hydrolase activity. In terms of biological role, lysosomal ceramidase that hydrolyzes sphingolipid ceramides into sphingosine and free fatty acids at acidic pH. Ceramides, sphingosine, and its phosphorylated form sphingosine-1-phosphate are bioactive lipids that mediate cellular signaling pathways regulating several biological processes including cell proliferation, apoptosis and differentiation. Has a higher catalytic efficiency towards C12-ceramides versus other ceramides. Also catalyzes the reverse reaction allowing the synthesis of ceramides from fatty acids and sphingosine. For the reverse synthetic reaction, the natural sphingosine D-erythro isomer is more efficiently utilized as a substrate compared to D-erythro-dihydrosphingosine and D-erythro-phytosphingosine, while the fatty acids with chain lengths of 12 or 14 carbons are the most efficiently used. Also has an N-acylethanolamine hydrolase activity. By regulating the levels of ceramides, sphingosine and sphingosine-1-phosphate in the epidermis, mediates the calcium-induced differentiation of epidermal keratinocytes. Also indirectly regulates tumor necrosis factor/TNF-induced apoptosis. By regulating the intracellular balance between ceramides and sphingosine, in adrenocortical cells, probably also acts as a regulator of steroidogenesis. May directly regulate steroidogenesis by binding the nuclear receptor NR5A1 and negatively regulating its transcriptional activity. The sequence is that of Acid ceramidase from Homo sapiens (Human).